A 307-amino-acid chain; its full sequence is Metapyrocatechase (307 aa).

2 consecutive VOC domains span residues 7 to 122 and 150 to 269; these read RPGH…LYAD and RFDH…VFCG. Positions 153, 214, and 265 each coordinate Fe cation.

This sequence belongs to the extradiol ring-cleavage dioxygenase family. In terms of assembly, homotetramer. The cofactor is Fe(2+).

The enzyme catalyses catechol + O2 = (2Z,4E)-2-hydroxy-6-oxohexa-2,4-dienoate + H(+). It participates in xenobiotic degradation; toluene degradation. This Pseudomonas aeruginosa protein is Metapyrocatechase (bztE).